A 285-amino-acid chain; its full sequence is Urease accessory protein UreD 1 (285 aa).

The protein belongs to the UreD family. UreD, UreF and UreG form a complex that acts as a GTP-hydrolysis-dependent molecular chaperone, activating the urease apoprotein by helping to assemble the nickel containing metallocenter of UreC. The UreE protein probably delivers the nickel.

It is found in the cytoplasm. Required for maturation of urease via the functional incorporation of the urease nickel metallocenter. The chain is Urease accessory protein UreD 1 from Pseudomonas syringae pv. tomato (strain ATCC BAA-871 / DC3000).